Consider the following 27-residue polypeptide: Small integral membrane protein 43 (27 aa).

The segment at 15 to 21 (HREPWGF) is important for interaction with SLC2A1 and SLC2A3.

In terms of assembly, interacts with glucose transporters SLC2A1/GLUT1 and SLC2A3/GLUT3; the interactions may promote SLC2A1- and SLC2A3-mediated glucose transport to meet the energy needs of mesendoderm differentiation.

It localises to the cell membrane. In terms of biological role, required for mesendoderm differentiation. Interacts with glucose transporters and promotes glucose uptake. Probably augments the glucose uptake capacity of glucose transporter proteins to meet the energy needs of mesendoderm differentiation. The protein is Small integral membrane protein 43 of Pongo abelii (Sumatran orangutan).